A 529-amino-acid chain; its full sequence is Peptide chain release factor 3 (529 aa).

The region spanning 11-280 is the tr-type G domain; the sequence is ARRRTFAIIS…GLVEWAPSPM (270 aa). GTP-binding positions include 20–27, 88–92, and 142–145; these read SHPDAGKT, DTPGH, and NKLD.

This sequence belongs to the TRAFAC class translation factor GTPase superfamily. Classic translation factor GTPase family. PrfC subfamily.

The protein localises to the cytoplasm. Its function is as follows. Increases the formation of ribosomal termination complexes and stimulates activities of RF-1 and RF-2. It binds guanine nucleotides and has strong preference for UGA stop codons. It may interact directly with the ribosome. The stimulation of RF-1 and RF-2 is significantly reduced by GTP and GDP, but not by GMP. This is Peptide chain release factor 3 from Erwinia tasmaniensis (strain DSM 17950 / CFBP 7177 / CIP 109463 / NCPPB 4357 / Et1/99).